The sequence spans 756 residues: Tubulin glycylase 3B (756 aa).

Residues 104–123 (TPLPRTVTSSPTAPEAQKRQ) are disordered. Residues 272 to 629 (LEERMAFIED…DLPKNPTAAT (358 aa)) form the TTL domain. Residues 440–443 (QKYI), lysine 453, and aspartate 455 each bind ATP. Residues 709-736 (ITKKKKLSASAGSSTAASAQPSTQNLTT) form a disordered region. Low complexity predominate over residues 716-727 (SASAGSSTAASA).

It is found in the cytoplasm. The protein resides in the cytoskeleton. The protein localises to the nucleus. Essential glycylase which modifies both tubulin and non-tubulin proteins, generating side chains of glycine on the gamma-carboxyl groups of specific glutamate residues of target proteins. Monoglycylates alpha-tubulin by adding a single glycine chain to generate monoglycine side chains, but is not involved in elongation step to generate polyglycine side chains on alpha-tubulin. Has the ability to both mono- and polyglycylate non-tubulin proteins such as up (Troponin T). Required for early steps of spermatogenesis. The polypeptide is Tubulin glycylase 3B (TTLL3B) (Drosophila melanogaster (Fruit fly)).